Here is a 341-residue protein sequence, read N- to C-terminus: Glyceraldehyde-3-phosphate dehydrogenase, cytosolic (341 aa).

Residues 15–16 (RI), Asp37, and Arg84 contribute to the NAD(+) site. D-glyceraldehyde 3-phosphate contacts are provided by residues 155 to 157 (SCT), Thr186, 215 to 216 (TG), and Arg238. Residue Cys156 is the Nucleophile of the active site. An NAD(+)-binding site is contributed by Asn320.

This sequence belongs to the glyceraldehyde-3-phosphate dehydrogenase family. In terms of assembly, homotetramer.

Its subcellular location is the cytoplasm. The enzyme catalyses D-glyceraldehyde 3-phosphate + phosphate + NAD(+) = (2R)-3-phospho-glyceroyl phosphate + NADH + H(+). The protein operates within carbohydrate degradation; glycolysis; pyruvate from D-glyceraldehyde 3-phosphate: step 1/5. Key enzyme in glycolysis that catalyzes the first step of the pathway by converting D-glyceraldehyde 3-phosphate (G3P) into 3-phospho-D-glyceroyl phosphate. Essential for the maintenance of cellular ATP levels and carbohydrate metabolism. This is Glyceraldehyde-3-phosphate dehydrogenase, cytosolic (GAPC) from Magnolia liliiflora (Mulan magnolia).